Here is an 85-residue protein sequence, read N- to C-terminus: UPF0291 protein str0508 (85 aa).

The segment at 62-85 (TPEKLRQVQREKGLHGRSLDDPES) is disordered.

It belongs to the UPF0291 family.

It is found in the cytoplasm. The chain is UPF0291 protein str0508 from Streptococcus thermophilus (strain CNRZ 1066).